Consider the following 154-residue polypeptide: RxLR effector protein PITG_12737 (154 aa).

Residues 1–16 (MRVYFILILAVATVSG) form the signal peptide. Positions 42–58 (RLLRAELTTDETYPEER) match the RxLR-dEER motif.

The protein belongs to the RxLR effector family.

The protein resides in the secreted. It localises to the host nucleus. It is found in the host cytoplasm. In terms of biological role, effector that enhances P.infestans colonization of Nicotiana benthamiana leaves. This Phytophthora infestans (strain T30-4) (Potato late blight agent) protein is RxLR effector protein PITG_12737.